The primary structure comprises 307 residues: Geranylgeranyl diphosphate synthase (307 aa).

The isopentenyl diphosphate site is built by lysine 52, arginine 55, and histidine 86. Positions 93 and 99 each coordinate Mg(2+). A (2E,6E)-farnesyl diphosphate-binding site is contributed by arginine 104. Arginine 105 contacts isopentenyl diphosphate. Positions 188, 189, and 226 each coordinate (2E,6E)-farnesyl diphosphate.

Belongs to the FPP/GGPP synthase family. Mg(2+) is required as a cofactor.

It carries out the reaction isopentenyl diphosphate + (2E,6E)-farnesyl diphosphate = (2E,6E,10E)-geranylgeranyl diphosphate + diphosphate. It participates in isoprenoid biosynthesis; geranylgeranyl diphosphate biosynthesis; geranylgeranyl diphosphate from farnesyl diphosphate and isopentenyl diphosphate: step 1/1. Catalyzes the condensation of farnesyl diphosphate (FPP) and isopentenyl diphosphate (IPP) to yield geranylgeranyl diphosphate (GGPP) needed for biosynthesis of carotenoids and diterpenes. In Pseudescherichia vulneris (Escherichia vulneris), this protein is Geranylgeranyl diphosphate synthase (crtE).